The chain runs to 347 residues: Ribosomal RNA small subunit methyltransferase C (347 aa).

This sequence belongs to the methyltransferase superfamily. RsmC family. As to quaternary structure, monomer.

It is found in the cytoplasm. The catalysed reaction is guanosine(1207) in 16S rRNA + S-adenosyl-L-methionine = N(2)-methylguanosine(1207) in 16S rRNA + S-adenosyl-L-homocysteine + H(+). In terms of biological role, specifically methylates the guanine in position 1207 of 16S rRNA in the 30S particle. This Yersinia enterocolitica serotype O:8 / biotype 1B (strain NCTC 13174 / 8081) protein is Ribosomal RNA small subunit methyltransferase C.